We begin with the raw amino-acid sequence, 144 residues long: Large ribosomal subunit protein uL15 (144 aa).

The tract at residues 1 to 48 (MRLNTLSPAAGSKSAAKRVGRGIGSGTGKTCGRGHKGQKSRSGGGVRI) is disordered. Residues 21-31 (RGIGSGTGKTC) show a composition bias toward gly residues.

It belongs to the universal ribosomal protein uL15 family. Part of the 50S ribosomal subunit.

Functionally, binds to the 23S rRNA. The sequence is that of Large ribosomal subunit protein uL15 from Shewanella woodyi (strain ATCC 51908 / MS32).